A 377-amino-acid chain; its full sequence is Nitric oxide reductase FlRd-NAD(+) reductase (377 aa).

Belongs to the FAD-dependent oxidoreductase family. It depends on FAD as a cofactor.

The protein localises to the cytoplasm. It catalyses the reaction 2 reduced [nitric oxide reductase rubredoxin domain] + NAD(+) + H(+) = 2 oxidized [nitric oxide reductase rubredoxin domain] + NADH. It participates in nitrogen metabolism; nitric oxide reduction. Its function is as follows. One of at least two accessory proteins for anaerobic nitric oxide (NO) reductase. Reduces the rubredoxin moiety of NO reductase. This is Nitric oxide reductase FlRd-NAD(+) reductase from Escherichia fergusonii (strain ATCC 35469 / DSM 13698 / CCUG 18766 / IAM 14443 / JCM 21226 / LMG 7866 / NBRC 102419 / NCTC 12128 / CDC 0568-73).